Consider the following 929-residue polypeptide: Chitin synthase 1 (929 aa).

Residues 1–12 show a composition bias toward gly residues; the sequence is MAYRGAGGPGGG. Disordered regions lie at residues 1–43 and 114–156; these read MAYR…QEDE and MGGH…GGGL. 2 stretches are compositionally biased toward polar residues: residues 21-33 and 140-149; these read QDLN…SNVQ and SWVQRQNPNA. An N-linked (GlcNAc...) asparagine glycan is attached at asparagine 560. The next 5 membrane-spanning stretches (helical) occupy residues 587–607, 643–663, 678–698, 730–750, and 758–778; these read FFFH…WFSL, LFNA…FILA, SFFV…YLVV, VILL…FMYL, and SFPY…VYAF. Asparagine 801 carries N-linked (GlcNAc...) asparagine glycosylation. A run of 2 helical transmembrane segments spans residues 857–877 and 897–917; these read TMLV…ITSD and FLLF…LWFL.

It belongs to the chitin synthase family. Class III subfamily.

It is found in the cell membrane. It carries out the reaction [(1-&gt;4)-N-acetyl-beta-D-glucosaminyl](n) + UDP-N-acetyl-alpha-D-glucosamine = [(1-&gt;4)-N-acetyl-beta-D-glucosaminyl](n+1) + UDP + H(+). Its function is as follows. Polymerizes chitin, a structural polymer of the cell wall and septum, by transferring the sugar moiety of UDP-GlcNAc to the non-reducing end of the growing chitin polymer. CHS1 and CHS3 have compensatory functions in cell wall modifications in responses to stresses. Involved in appressoria formation and required for full virulence. The chain is Chitin synthase 1 from Pyricularia oryzae (strain 70-15 / ATCC MYA-4617 / FGSC 8958) (Rice blast fungus).